A 383-amino-acid polypeptide reads, in one-letter code: MESIEQSIIPGLPDDLALRCIAKLSHGYHGVLECVSRGWRDLVRGADYSCYKARNGWSGSWLFVLTERSKNQWVAYDPEADRWHPLPRTRAVQDGWHHSGFACVCVSNCLLVIGGCYAPSVSSFPHQKPVVTKDVMRFDPFKKQWKMVASMRTPRTHFACTSVSGKVYVAGGRNLTHSRGIPSAEVYDPVADRWEELPAMPRPQMDCSGLSYRGCFHVLSDQVGFAEQNSSEVFNPRDMTWSTVEDVWPFSRAMQFAVQVMKNDRVYTIVDWGESLIKTRDTDEGEWYNVGSVPSVVLPNHPRELEAFGYGFAALRNELYVIGGKVLKWEESGAGRFDIVRLPVVRVCNPLDRPLNWRETKPMCIPAGGSIIGCVSLEESSPP.

The 48-residue stretch at 7 to 54 (SIIPGLPDDLALRCIAKLSHGYHGVLECVSRGWRDLVRGADYSCYKAR) folds into the F-box domain. Kelch repeat units lie at residues 50–103 (CYKA…GFAC), 109–165 (CLLV…SVSG), 166–214 (KVYV…SYRG), 216–263 (FHVL…VMKN), and 318–377 (ELYV…CVSL).

The sequence is that of F-box/kelch-repeat protein At1g16250 from Arabidopsis thaliana (Mouse-ear cress).